We begin with the raw amino-acid sequence, 153 residues long: Prostaglandin E synthase (153 aa).

The Lumenal segment spans residues 1-13; sequence MPPSGLELMNGQV. The chain crosses the membrane as a helical span at residues 14 to 42; sequence LPAFLLCSALLVIKMYVVAVITGQVRLRK. Arg-39 provides a ligand contact to glutathione. The Cytoplasmic portion of the chain corresponds to 43–61; it reads KAFANPEDAQRHGGLQYCR. A helical transmembrane segment spans residues 62 to 91; it reads NDPDVERCLRAHRNDMETIYPFLFLGFVYS. 74–78 serves as a coordination point for glutathione; it reads RNDME. Topologically, residues 92 to 96 are lumenal; sequence FLGPN. A helical membrane pass occupies residues 97 to 120; it reads PFVARMHFLVFFLGRMVHTVAYLG. Glutathione is bound by residues His-114 and Tyr-118. Residues 121–124 are Cytoplasmic-facing; sequence KLRA. The helical transmembrane segment at 125 to 153 threads the bilayer; the sequence is PTRSLAYTLAQLPCASMALQIVWEAARHL. 127–131 contributes to the glutathione binding site; sequence RSLAY.

It belongs to the MAPEG family. Homotrimer. Glutathione is required as a cofactor.

Its subcellular location is the membrane. It localises to the cytoplasm. The protein localises to the perinuclear region. The catalysed reaction is prostaglandin H2 = prostaglandin E2. It catalyses the reaction 2-glyceryl-prostaglandin H2 = 2-glyceryl-prostaglandin E2. The enzyme catalyses prostaglandin G2 = (15S)-15-hydroperoxy-prostaglandin E2. It carries out the reaction 1-chloro-2,4-dinitrobenzene + glutathione = 2,4-dinitrophenyl-S-glutathione + chloride + H(+). The catalysed reaction is (5S)-hydroperoxy-(6E,8Z,11Z,14Z)-eicosatetraenoate + 2 glutathione = (5S)-hydroxy-(6E,8Z,11Z,14Z)-eicosatetraenoate + glutathione disulfide + H2O. It functions in the pathway lipid metabolism; prostaglandin biosynthesis. Its function is as follows. Terminal enzyme of the cyclooxygenase (COX)-2-mediated prostaglandin E2 (PGE2) biosynthetic pathway. Catalyzes the glutathione-dependent oxidoreduction of prostaglandin endoperoxide H2 (PGH2) to prostaglandin E2 (PGE2) in response to inflammatory stimuli. Plays a key role in inflammation response, fever and pain. Also catalyzes the oxidoreduction of endocannabinoids into prostaglandin glycerol esters and PGG2 into 15-hydroperoxy-PGE2. In addition, displays low glutathione transferase and glutathione-dependent peroxidase activities, toward 1-chloro-2,4-dinitrobenzene and 5-hydroperoxyicosatetraenoic acid (5-HPETE), respectively. This is Prostaglandin E synthase (PTGES) from Bos taurus (Bovine).